Consider the following 185-residue polypeptide: Large ribosomal subunit protein uL5 (185 aa).

It belongs to the universal ribosomal protein uL5 family. In terms of assembly, part of the 50S ribosomal subunit; part of the 5S rRNA/L5/L18/L25 subcomplex. Contacts the 5S rRNA and the P site tRNA. Forms a bridge to the 30S subunit in the 70S ribosome.

Its function is as follows. This is one of the proteins that bind and probably mediate the attachment of the 5S RNA into the large ribosomal subunit, where it forms part of the central protuberance. In the 70S ribosome it contacts protein S13 of the 30S subunit (bridge B1b), connecting the 2 subunits; this bridge is implicated in subunit movement. Contacts the P site tRNA; the 5S rRNA and some of its associated proteins might help stabilize positioning of ribosome-bound tRNAs. In Bradyrhizobium sp. (strain ORS 278), this protein is Large ribosomal subunit protein uL5.